Consider the following 1023-residue polypeptide: Hemolysin, chromosomal (1023 aa).

3 consecutive transmembrane segments (helical) span residues 237 to 259 (IGAG…ILSN), 267 to 326 (KAAA…LSIA), and 364 to 410 (DASL…GILE). 2 N6-myristoyl lysine lipidation sites follow: K563 and K689. Hemolysin-type calcium-binding repeat units lie at residues 731-748 (FGSK…DDHI), 749-766 (EGND…NDTL), 767-784 (SGGN…NDKL), 785-802 (IGGA…DDEL), 815-832 (SGGK…ADLL), and 833-850 (DGGE…NDIY). Basic and acidic residues predominate over residues 747 to 763 (HIEGNDGNDRLYGDKGN). The tract at residues 747–780 (HIEGNDGNDRLYGDKGNDTLSGGNGDDQLYGGDG) is disordered.

The protein belongs to the RTX prokaryotic toxin (TC 1.C.11) family. In terms of processing, myristoylated by HlyC; the toxin only becomes active when modified. Mainly myristoylated, while a minor fraction is acylated with pentadecanoyl (C15:0; 26%) and heptadecanoyl (C17:0; 6%) fatty acyl groups. Fatty acylation is involved in binding to host membranes and promotes the irreversible insertion of Hemolysin into the host cell membrane. Can be activated by both myristoylation and palmitoylation, but HlyC catalyzes lysine myristoylation.

The protein resides in the secreted. The protein localises to the host cell membrane. Its function is as follows. Bacterial hemolysins are exotoxins that attack blood cell membranes and cause cell rupture by forming a pore. The protein is Hemolysin, chromosomal of Escherichia coli.